A 359-amino-acid polypeptide reads, in one-letter code: Endoglucanase (359 aa).

An N-terminal signal peptide occupies residues 1–23 (MPLRALVAVIVTTAVMLVPRAWA). The active-site Proton donor is the glutamate 53. Aspartate 110 acts as the Nucleophile in catalysis.

The protein belongs to the glycosyl hydrolase 8 (cellulase D) family.

The enzyme catalyses Endohydrolysis of (1-&gt;4)-beta-D-glucosidic linkages in cellulose, lichenin and cereal beta-D-glucans.. Its function is as follows. The biological conversion of cellulose to glucose generally requires three types of hydrolytic enzymes: (1) Endoglucanases which cut internal beta-1,4-glucosidic bonds; (2) Exocellobiohydrolases that cut the disaccharide cellobiose from the non-reducing end of the cellulose polymer chain; (3) Beta-1,4-glucosidases which hydrolyze the cellobiose and other short cello-oligosaccharides to glucose. The chain is Endoglucanase from Cellulomonas uda.